The primary structure comprises 385 residues: 8-amino-7-oxononanoate synthase (385 aa).

Arg21 is a substrate binding site. 108–109 (GF) provides a ligand contact to pyridoxal 5'-phosphate. His133 contributes to the substrate binding site. Ser179, His207, and Thr233 together coordinate pyridoxal 5'-phosphate. Lys236 is modified (N6-(pyridoxal phosphate)lysine). Thr352 is a substrate binding site.

The protein belongs to the class-II pyridoxal-phosphate-dependent aminotransferase family. BioF subfamily. Homodimer. Pyridoxal 5'-phosphate is required as a cofactor.

It carries out the reaction 6-carboxyhexanoyl-[ACP] + L-alanine + H(+) = (8S)-8-amino-7-oxononanoate + holo-[ACP] + CO2. It functions in the pathway cofactor biosynthesis; biotin biosynthesis. Its function is as follows. Catalyzes the decarboxylative condensation of pimeloyl-[acyl-carrier protein] and L-alanine to produce 8-amino-7-oxononanoate (AON), [acyl-carrier protein], and carbon dioxide. This is 8-amino-7-oxononanoate synthase from Salmonella choleraesuis (strain SC-B67).